A 261-amino-acid polypeptide reads, in one-letter code: Glucose 1-dehydrogenase 3 (261 aa).

11-35 (VITGGSTGLGRAMAVRFGQEEAKVV) is an NAD(+) binding site. Ser-145 lines the substrate pocket. Tyr-158 serves as the catalytic Proton acceptor.

It belongs to the short-chain dehydrogenases/reductases (SDR) family. Homotetramer.

The enzyme catalyses D-glucose + NAD(+) = D-glucono-1,5-lactone + NADH + H(+). It carries out the reaction D-glucose + NADP(+) = D-glucono-1,5-lactone + NADPH + H(+). In Priestia megaterium (Bacillus megaterium), this protein is Glucose 1-dehydrogenase 3 (gdhIII).